The sequence spans 176 residues: MTNIRKSHPLLKIVNDALIDLPAPSNISSWWNFGSLLGICLTIQILTGLFLAMHYTSDTTTAFNSVTHICRDVNYGWLLRYLHANGASMFFICLYLHVGRGLYYGSYTYTETWNMGIILLFAVMATAFMGYVLPWGQMSFWGATVITNLLSAIPYVGTDLVEWIWGGFSVDKATLT.

3 helical membrane passes run 33 to 53 (FGSLLGICLTIQILTGLFLAM), 77 to 98 (WLLRYLHANGASMFFICLYLHV), and 113 to 133 (WNMGIILLFAVMATAFMGYVL). Residues His83 and His97 each contribute to the heme b site.

Belongs to the cytochrome b family. As to quaternary structure, the cytochrome bc1 complex contains 11 subunits: 3 respiratory subunits (MT-CYB, CYC1 and UQCRFS1), 2 core proteins (UQCRC1 and UQCRC2) and 6 low-molecular weight proteins (UQCRH/QCR6, UQCRB/QCR7, UQCRQ/QCR8, UQCR10/QCR9, UQCR11/QCR10 and a cleavage product of UQCRFS1). This cytochrome bc1 complex then forms a dimer. Requires heme b as cofactor.

The protein resides in the mitochondrion inner membrane. Component of the ubiquinol-cytochrome c reductase complex (complex III or cytochrome b-c1 complex) that is part of the mitochondrial respiratory chain. The b-c1 complex mediates electron transfer from ubiquinol to cytochrome c. Contributes to the generation of a proton gradient across the mitochondrial membrane that is then used for ATP synthesis. The polypeptide is Cytochrome b (MT-CYB) (Tomopeas ravum (Blunt-eared bat)).